The sequence spans 187 residues: Ribosome-recycling factor (187 aa).

This sequence belongs to the RRF family.

It localises to the cytoplasm. Functionally, responsible for the release of ribosomes from messenger RNA at the termination of protein biosynthesis. May increase the efficiency of translation by recycling ribosomes from one round of translation to another. In Ruegeria pomeroyi (strain ATCC 700808 / DSM 15171 / DSS-3) (Silicibacter pomeroyi), this protein is Ribosome-recycling factor.